A 288-amino-acid chain; its full sequence is Protein-S-isoprenylcysteine O-methyltransferase (288 aa).

A helical transmembrane segment spans residues S13–L29. Topologically, residues T30–R45 are lumenal. The chain crosses the membrane as a helical span at residues I46–Y63. Residues K64–R73 lie on the Cytoplasmic side of the membrane. A helical membrane pass occupies residues A74–Q91. Residues S92–P96 are Lumenal-facing. The helical transmembrane segment at F97 to A116 threads the bilayer. At M117–E135 the chain is on the cytoplasmic side. The helical transmembrane segment at Y136–I153 threads the bilayer. Residues Y154 to K158 lie on the Lumenal side of the membrane. Residues Q159 to R178 form a helical membrane-spanning segment. Residues K179–S216 lie on the Cytoplasmic side of the membrane. S-adenosyl-L-methionine is bound by residues Q194, H201–V204, Y209, and H214–Y217. The chain crosses the membrane as a helical span at residues Y217–C232. A topological domain (lumenal) is located at residue N233. Residues P234–F248 form a helical membrane-spanning segment. Topologically, residues S249–P288 are cytoplasmic. R251 provides a ligand contact to substrate. An S-adenosyl-L-methionine-binding site is contributed by E255.

This sequence belongs to the class VI-like SAM-binding methyltransferase superfamily. Isoprenylcysteine carboxyl methyltransferase family.

It is found in the endoplasmic reticulum membrane. The catalysed reaction is [protein]-C-terminal S-[(2E,6E)-farnesyl]-L-cysteine + S-adenosyl-L-methionine = [protein]-C-terminal S-[(2E,6E)-farnesyl]-L-cysteine methyl ester + S-adenosyl-L-homocysteine. Its function is as follows. Catalyzes the post-translational methylation of isoprenylated C-terminal cysteine residues. The chain is Protein-S-isoprenylcysteine O-methyltransferase (icmt) from Xenopus laevis (African clawed frog).